Consider the following 70-residue polypeptide: Disintegrin triflavin (70 aa).

Residues 1–70 (GEECDCGSPS…SADCPRWNGL (70 aa)) enclose the Disintegrin domain. 6 disulfide bridges follow: C4–C19, C6–C14, C13–C36, C27–C33, C32–C57, and C45–C64. Positions 49 to 51 (RGD) match the Cell attachment site motif.

The protein belongs to the venom metalloproteinase (M12B) family. P-II subfamily. P-IIa sub-subfamily. Monomer. As to expression, expressed by the venom gland.

The protein localises to the secreted. In terms of biological role, inhibits fibrinogen interaction with platelets. Acts by binding to alpha-IIb/beta-3 (ITGA2B/ITGB3) on the platelet surface and inhibits aggregation induced by ADP, thrombin, platelet-activating factor and collagen. In Protobothrops flavoviridis (Habu), this protein is Disintegrin triflavin.